Here is a 175-residue protein sequence, read N- to C-terminus: Ribosome maturation factor RimM (175 aa).

The region spanning 97 to 170 (NGQYYWTDVL…YLYVDWQMAW (74 aa)) is the PRC barrel domain.

This sequence belongs to the RimM family. Binds ribosomal protein uS19.

It is found in the cytoplasm. Functionally, an accessory protein needed during the final step in the assembly of 30S ribosomal subunit, possibly for assembly of the head region. Essential for efficient processing of 16S rRNA. May be needed both before and after RbfA during the maturation of 16S rRNA. It has affinity for free ribosomal 30S subunits but not for 70S ribosomes. The chain is Ribosome maturation factor RimM from Dichelobacter nodosus (strain VCS1703A).